The sequence spans 891 residues: Putative alpha,alpha-trehalose-phosphate synthase [UDP-forming] 100 kDa subunit (891 aa).

Threonine 88 carries the post-translational modification Phosphothreonine. The segment at 88–126 is disordered; that stretch reads TGGSMTPGLGAMSPIPGSGRSSPLYTQPRSRATSPSRVR. A compositionally biased stretch (polar residues) spans 106-124; that stretch reads GRSSPLYTQPRSRATSPSR. A phosphoserine mark is found at serine 108 and serine 109. Residues 132-613 form a glycosyltransferase region; sequence AAPGIGAGAL…VTGFETKLKK (482 aa).

In the N-terminal section; belongs to the glycosyltransferase 20 family.

It catalyses the reaction D-glucose 6-phosphate + UDP-alpha-D-glucose = alpha,alpha-trehalose 6-phosphate + UDP + H(+). The polypeptide is Putative alpha,alpha-trehalose-phosphate synthase [UDP-forming] 100 kDa subunit (Schizosaccharomyces pombe (strain 972 / ATCC 24843) (Fission yeast)).